A 247-amino-acid chain; its full sequence is 14-3-3 protein gamma (247 aa).

N-acetylmethionine is present on Met-1. An N-acetylvaline; in 14-3-3 protein gamma, N-terminally processed modification is found at Val-2. The interaction with SPATA18/MIEAP stretch occupies residues 2 to 247; sequence VDREQLVQKA…QDDDGGEGNN (246 aa). Residue Ser-71 is modified to Phosphoserine. Tyr-133 is modified (phosphotyrosine). Thr-145 carries the phosphothreonine modification. Ser-215 carries the post-translational modification Phosphoserine. Thr-234 bears the Phosphothreonine mark. Position 235 is a phosphoserine (Ser-235).

It belongs to the 14-3-3 family. In terms of assembly, homodimer. Part of a complex that contains DSG3, PKP1, YAP1 and YWHAG; the complex is required for localization of DSG3 and YAP1 to the cell membrane in keratinocytes. Interacts with SAMSN1. Interacts with RAF1, SSH1 and CRTC2/TORC2. Interacts with ABL1 (phosphorylated form); the interaction retains it in the cytoplasm. Interacts with GAB2. Interacts with MDM4 (phosphorylated); negatively regulates MDM4 activity toward TP53. Interacts with PKA-phosphorylated AANAT and SIRT2. Interacts with the 'Thr-369' phosphorylated form of DAPK2. Interacts with PI4KB, TBC1D22A and TBC1D22B. Interacts with SLITRK1. Interacts with LRRK2; this interaction is dependent on LRRK2 phosphorylation. Interacts with MARK2 and MARK3. Interacts with MEFV. Interacts with ENDOG, TSC2 and PIK3C3; interaction with ENDOG weakens its interaction with TSC2 and PIK3C3. Interacts with (phosphorylated) WDR24. Interacts with BEST1; this interaction promotes L-glutamate channel activity leading to the positive regulation of NMDA glutamate receptor activity through the L-glutamate secretion. Interacts with PKP1 (when phosphorylated); the interaction results in translocation of PKP1 to the cytoplasm and loss of intercellular adhesion in keratinocytes. Interacts with SPATA18/MIEAP; a protein that also plays a role in MALM. Phosphorylated by various PKC isozymes.

The protein resides in the cytoplasm. The protein localises to the cytosol. It is found in the mitochondrion matrix. Its function is as follows. Adapter protein implicated in the regulation of a large spectrum of both general and specialized signaling pathways. Binds to a large number of partners, usually by recognition of a phosphoserine or phosphothreonine motif. Binding generally results in the modulation of the activity of the binding partner. Promotes inactivation of WDR24 component of the GATOR2 complex by binding to phosphorylated WDR24. Participates in the positive regulation of NMDA glutamate receptor activity by promoting the L-glutamate secretion through interaction with BEST1. Reduces keratinocyte intercellular adhesion, via interacting with PKP1 and sequestering it in the cytoplasm, thereby reducing its incorporation into desmosomes. Plays a role in mitochondrial protein catabolic process (also named MALM) that promotes the degradation of damaged proteins inside mitochondria. The polypeptide is 14-3-3 protein gamma (Bos taurus (Bovine)).